Reading from the N-terminus, the 1198-residue chain is Structural polyprotein (1198 aa).

The interval 2–15 is interaction with host EXOC1; the sequence is TKKPGGPGKNRAIN. Topologically, residues 2-109 are cytoplasmic; sequence TKKPGGPGKN…RKQNKRGGNE (108 aa). The hydrophobic; homodimerization of capsid protein C stretch occupies residues 37–72; sequence LLDGRGPVRFVLALITFFKFTALAPTKALLGRWKAV. Residues 106 to 127 constitute a propeptide, ER anchor for the capsid protein C, removed in mature form by serine protease NS3; the sequence is GGNEGSIMWLASLAVVIAYAGA. The chain crosses the membrane as a helical span at residues 110 to 130; it reads GSIMWLASLAVVIAYAGAMKL. The Extracellular portion of the chain corresponds to 131 to 253; that stretch reads SNFQGKLLMT…ATRYLMKTEN (123 aa). N142 carries an N-linked (GlcNAc...) asparagine; by host glycan. The chain crosses the membrane as a helical span at residues 254 to 274; the sequence is WIIRNPGYAFLAATLGWMLGS. Residues 275-279 lie on the Cytoplasmic side of the membrane; that stretch reads NNGQR. A helical transmembrane segment spans residues 280-294; it reads VVFTILLLLVAPAYS. Topologically, residues 295 to 746 are extracellular; sequence FNCLGMGNRD…QVFGGAFRTL (452 aa). 6 cysteine pairs are disulfide-bonded: C297-C324, C354-C410, C354-C415, C368-C399, C386-C410, and C386-C415. Positions 392–405 are fusion peptide; that stretch reads DRGWGNGCGLFGKG. A glycan (N-linked (GlcNAc...) asparagine; by host) is linked at N448. 2 cysteine pairs are disulfide-bonded: C484–C581 and C598–C629. Residues 747–767 traverse the membrane as a helical segment; the sequence is FGGMSWITQGLMGALLLWMGV. The Cytoplasmic segment spans residues 768 to 773; that stretch reads NARDRS. A helical membrane pass occupies residues 774–794; it reads IALAFLATGGVLVFLATNVHA. Topologically, residues 795–1198 are extracellular; it reads DTGCAIDITR…CADAWGHHLH (404 aa). Disulfide bonds link C798–C809, C849–C937, C973–C1017, C1074–C1123, C1085–C1106, and C1107–C1110. N924 and N1001 each carry an N-linked (GlcNAc...) asparagine; by host glycan. Residues 1152-1177 are disordered; sequence VDPFSAGPSGDVSGHPGGPSQEVDGQ.

Homodimer. Interacts (via N-terminus) with host EXOC1 (via C-terminus); this interaction results in EXOC1 degradation through the proteasome degradation pathway. Interacts with host CAPRIN1; this interaction is involved in the suppression of the integrated stress response. As to quaternary structure, forms heterodimers with envelope protein E in the endoplasmic reticulum and Golgi. In terms of assembly, homodimer; in the endoplasmic reticulum and Golgi. Interacts with protein prM. Interacts with non-structural protein 1. In terms of processing, genome polyprotein: Specific enzymatic cleavages in vivo yield mature proteins. Cleavages in the lumen of endoplasmic reticulum are performed by host signal peptidase, whereas cleavages in the cytoplasmic side are performed by serine protease NS3. Signal cleavage at the 2K-4B site requires a prior NS3 protease-mediated cleavage at the 4A-2K site. Post-translationally, cleaved in post-Golgi vesicles by a host furin, releasing the mature small envelope protein M, and peptide pr. This cleavage is incomplete as up to 30% of viral particles still carry uncleaved prM. N-glycosylated.

It is found in the secreted. Its subcellular location is the virion membrane. The protein resides in the host endoplasmic reticulum membrane. Its function is as follows. Plays a role in virus budding by binding to the cell membrane and gathering the viral RNA into a nucleocapsid that forms the core of a mature virus particle. During virus entry, may induce genome penetration into the host cytoplasm after hemifusion induced by the surface proteins. Can migrate to the cell nucleus where it modulates host functions. Overcomes the anti-viral effects of host EXOC1 by sequestering and degrading the latter through the proteasome degradation pathway. Inhibits the integrated stress response (ISR) in the infected cell by binding to host CAPRIN1. Inhibits RNA silencing by interfering with host Dicer. In terms of biological role, prevents premature fusion activity of envelope proteins in trans-Golgi by binding to envelope protein E at pH6.0. After virion release in extracellular space, gets dissociated from E dimers. Functionally, acts as a chaperone for envelope protein E during intracellular virion assembly by masking and inactivating envelope protein E fusion peptide. prM is the only viral peptide matured by host furin in the trans-Golgi network probably to avoid catastrophic activation of the viral fusion activity in acidic Golgi compartment prior to virion release. prM-E cleavage is inefficient, and many virions are only partially matured. These uncleaved prM would play a role in immune evasion. Its function is as follows. May play a role in virus budding. Exerts cytotoxic effects by activating a mitochondrial apoptotic pathway through M ectodomain. May display a viroporin activity. Binds to host cell surface receptor and mediates fusion between viral and cellular membranes. Envelope protein is synthesized in the endoplasmic reticulum in the form of heterodimer with protein prM. They play a role in virion budding in the ER, and the newly formed immature particle is covered with 60 spikes composed of heterodimer between precursor prM and envelope protein E. The virion is transported to the Golgi apparatus where the low pH causes dissociation of PrM-E heterodimers and formation of E homodimers. prM-E cleavage is inefficient, and many virions are only partially matured. These uncleaved prM would play a role in immune evasion. In terms of biological role, may play a role in neuroinvasiveness. This chain is Structural polyprotein, found in Japanese encephalitis virus (strain Jaoars982) (JEV).